The primary structure comprises 277 residues: MLITKYQGSGNDFIIIDNRDNFVYKEIEKLGLSINEFVRKLCEQHTSVGADGVILIEKARNTKNHFSWAFFNADGSAAEMCGNGSRCAARFAYEKDIAPKDIVFETIAGEIEAHIMDSKRVKVQLTPYHSHQKNIEIKTEYGTFKGHFVNTGVPHFVIFVDEDELDNLDVEKVGRAIRYHEYFAPKGTNVNFVAKTKNGSFRIRTYERGVEGETLACGTGSAACGINAYLLGLSASNIVDIITKSGELLKITIENDKVFLEGPTTKVFEGMLSYEIF.

Positions 11 and 72 each coordinate substrate. The active-site Proton donor is the Cys81. Residues 82–83 (GN), Asn189, and 207–208 (ER) each bind substrate. Cys217 functions as the Proton acceptor in the catalytic mechanism. Residue 218-219 (GT) participates in substrate binding.

It belongs to the diaminopimelate epimerase family. In terms of assembly, homodimer.

The protein localises to the cytoplasm. It carries out the reaction (2S,6S)-2,6-diaminopimelate = meso-2,6-diaminopimelate. It participates in amino-acid biosynthesis; L-lysine biosynthesis via DAP pathway; DL-2,6-diaminopimelate from LL-2,6-diaminopimelate: step 1/1. In terms of biological role, catalyzes the stereoinversion of LL-2,6-diaminopimelate (L,L-DAP) to meso-diaminopimelate (meso-DAP), a precursor of L-lysine and an essential component of the bacterial peptidoglycan. This Hydrogenobaculum sp. (strain Y04AAS1) protein is Diaminopimelate epimerase.